Here is a 336-residue protein sequence, read N- to C-terminus: MGSTFRDRTVELHSLSQTLKKIGAIPSVHQDEDDPASSKRSSPGSEFNKKASRIGLGIKETSQKITRLAKLAKQSTIFNDRTVEIQELTVLIRNDITGLNMALSDLQTLQNMELADGNYSQDQVGHYTAVCDDLKTRLMGATKQLQDVLTTRSENMKAHENRKQLFSTKNAVDSPPQNNAKSVPEPPPWSSSSNPFGNLQQPLLPPLNTGAPPGSQLRRRSAIENAPSQQMEMSLLQQTVPKQENYSQSRAVALHSVESRITELSGIFPQLATMVTQQGELAIRIDDNMDESLVNVEGARSALLQHLTRISSNRWLMMKIFAVIILFLIVFLFFVA.

At 1-314 (MGSTFRDRTV…QHLTRISSNR (314 aa)) the chain is on the cytoplasmic side. 2 disordered regions span residues 23–53 (GAIPSVHQDEDDPASSKRSSPGSEFNKKASR) and 152–218 (RSEN…SQLR). The segment covering 154 to 163 (ENMKAHENRK) has biased composition (basic and acidic residues). Residues 164–181 (QLFSTKNAVDSPPQNNAK) are compositionally biased toward polar residues. Low complexity predominate over residues 190–202 (SSSSNPFGNLQQP). The region spanning 244–306 (ENYSQSRAVA…EGARSALLQH (63 aa)) is the t-SNARE coiled-coil homology domain. Residues 315–335 (WLMMKIFAVIILFLIVFLFFV) form a helical; Anchor for type IV membrane protein membrane-spanning segment. Position 336 (alanine 336) is a topological domain, vesicular.

Belongs to the syntaxin family. As to quaternary structure, part of the t-SNARE complex. Interacts with CDC48A, but not with VPS45.

The protein resides in the golgi apparatus. It is found in the cis-Golgi network membrane. It localises to the cytoplasm. Its subcellular location is the endosome. In terms of biological role, vesicle trafficking protein that functions in the secretory pathway. This is Syntaxin-31 (SYP31) from Arabidopsis thaliana (Mouse-ear cress).